A 132-amino-acid polypeptide reads, in one-letter code: Agouti-signaling protein (132 aa).

A signal peptide spans 1–22; that stretch reads MDVTRLLLATLLVFLCFFTAYS. Asparagine 39 is a glycosylation site (N-linked (GlcNAc...) asparagine). Residues 61–79 are compositionally biased toward basic and acidic residues; it reads EISRKEAEKKRSSKKEASM. The interval 61–87 is disordered; it reads EISRKEAEKKRSSKKEASMKKVARPRT. Disulfide bonds link cysteine 93-cysteine 108, cysteine 100-cysteine 114, cysteine 107-cysteine 125, cysteine 111-cysteine 132, and cysteine 116-cysteine 123. An Agouti domain is found at 93 to 132; sequence CVATRDSCKPPAPACCDPCASCQCRFFRSACSCRVLSLNC.

The protein localises to the secreted. Its function is as follows. Involved in the regulation of melanogenesis. The binding of ASP to MC1R precludes alpha-MSH initiated signaling and thus blocks production of cAMP, leading to a down-regulation of eumelanogenesis (brown/black pigment) and thus increasing synthesis of pheomelanin (yellow/red pigment). The chain is Agouti-signaling protein (ASIP) from Macaca fascicularis (Crab-eating macaque).